We begin with the raw amino-acid sequence, 65 residues long: Large ribosomal subunit protein uL29 (65 aa).

It belongs to the universal ribosomal protein uL29 family.

This is Large ribosomal subunit protein uL29 from Syntrophus aciditrophicus (strain SB).